A 737-amino-acid chain; its full sequence is Catalase-peroxidase (737 aa).

A disordered region spans residues 1–29 (MTDSPDATTGGCPVAHGDRLPHPTQGGAN). Residues 101-227 (WHSAGTYRVS…LGATHMGLIY (127 aa)) constitute a cross-link (tryptophyl-tyrosyl-methioninium (Trp-Tyr) (with M-253)). The Proton acceptor role is filled by His102. The segment at residues 227 to 253 (YVNPEGPEGKPDPVAAARDIRETFGRM) is a cross-link (tryptophyl-tyrosyl-methioninium (Tyr-Met) (with W-101)). A heme b-binding site is contributed by His268.

Belongs to the peroxidase family. Peroxidase/catalase subfamily. In terms of assembly, homodimer or homotetramer. The cofactor is heme b. In terms of processing, formation of the three residue Trp-Tyr-Met cross-link is important for the catalase, but not the peroxidase activity of the enzyme.

It carries out the reaction H2O2 + AH2 = A + 2 H2O. The enzyme catalyses 2 H2O2 = O2 + 2 H2O. Functionally, bifunctional enzyme with both catalase and broad-spectrum peroxidase activity. The sequence is that of Catalase-peroxidase from Saccharopolyspora erythraea (strain ATCC 11635 / DSM 40517 / JCM 4748 / NBRC 13426 / NCIMB 8594 / NRRL 2338).